Here is a 66-residue protein sequence, read N- to C-terminus: Metallothionein-like protein type 3 (66 aa).

Belongs to the metallothionein superfamily. Type 15 family.

In terms of biological role, metallothioneins have a high content of cysteine residues that bind various heavy metals. This chain is Metallothionein-like protein type 3 (MT2), found in Malus domestica (Apple).